The following is a 180-amino-acid chain: Shikimate kinase (180 aa).

14-19 (GAGKSC) contributes to the ATP binding site. Position 18 (S18) interacts with Mg(2+). D36, R60, and G82 together coordinate substrate. Position 120 (R120) interacts with ATP. R139 lines the substrate pocket.

It belongs to the shikimate kinase family. In terms of assembly, monomer. Requires Mg(2+) as cofactor.

Its subcellular location is the cytoplasm. It catalyses the reaction shikimate + ATP = 3-phosphoshikimate + ADP + H(+). It participates in metabolic intermediate biosynthesis; chorismate biosynthesis; chorismate from D-erythrose 4-phosphate and phosphoenolpyruvate: step 5/7. Catalyzes the specific phosphorylation of the 3-hydroxyl group of shikimic acid using ATP as a cosubstrate. The polypeptide is Shikimate kinase (Xanthomonas oryzae pv. oryzae (strain PXO99A)).